Consider the following 136-residue polypeptide: Histone H3 (136 aa).

The disordered stretch occupies residues 1 to 42; it reads MARTKQTARKSTGGKAPRKQIAAKAARKAAPSTGGVKKPHRY. Lys-5 carries the post-translational modification N6,N6,N6-trimethyllysine; alternate. Lys-5 bears the N6,N6-dimethyllysine; alternate mark. Residues Lys-5 and Lys-10 each carry the N6-methyllysine; alternate modification. Lys-10 is modified (N6-acetyllysine; alternate). The residue at position 11 (Ser-11) is a Phosphoserine. N6,N6-dimethyllysine; alternate is present on Lys-15. N6-acetyllysine; alternate is present on residues Lys-15, Lys-19, Lys-24, Lys-28, and Lys-37. Lys-19, Lys-24, Lys-28, and Lys-37 each carry N6-methyllysine; alternate. The span at 19 to 31 shows a compositional bias: low complexity; the sequence is KQIAAKAARKAAP. Residues Lys-28 and Lys-37 each carry the N6,N6,N6-trimethyllysine; alternate modification. Lys-28 and Lys-37 each carry N6,N6-dimethyllysine; alternate. N6-acetyllysine occurs at positions 57 and 65. Lys-80 is subject to N6,N6,N6-trimethyllysine; alternate. At Lys-80 the chain carries N6,N6-dimethyllysine; alternate. Lys-80 carries the post-translational modification N6-methyllysine; alternate.

The protein belongs to the histone H3 family. In terms of assembly, the nucleosome is a histone octamer containing two molecules each of H2A, H2B, H3 and H4 assembled in one H3-H4 heterotetramer and two H2A-H2B heterodimers. The octamer wraps approximately 147 bp of DNA. Phosphorylated to form H3S10ph. H3S10ph promotes subsequent H3K14ac formation and is required for transcriptional activation through TBP recruitment to the promoters. In terms of processing, mono-, di- and trimethylated by the COMPASS complex to form H3K4me1/2/3. H3K4me activates gene expression by regulating transcription elongation and plays a role in telomere length maintenance. H3K4me enrichment correlates with transcription levels, and occurs in a 5' to 3' gradient with H3K4me3 enrichment at the 5'-end of genes, shifting to H3K4me2 and then H3K4me1. Methylated by SET2 to form H3K36me. H3K36me represses gene expression. Methylated by DOT1 to form H3K79me. H3K79me is required for association of SIR proteins with telomeric regions and for telomeric silencing. The COMPASS-mediated formation of H3K4me2/3 and the DOT1-mediated formation of H3K79me require H2BK123ub1. Post-translationally, acetylation of histone H3 leads to transcriptional activation. H3K14ac formation by GCN5 is promoted by H3S10ph. H3K14ac can also be formed by ESA1. H3K56ac formation occurs predominantly in newly synthesized H3 molecules during G1, S and G2/M of the cell cycle and may be involved in DNA repair.

The protein localises to the nucleus. It is found in the chromosome. Its function is as follows. Core component of nucleosome. Nucleosomes wrap and compact DNA into chromatin, limiting DNA accessibility to the cellular machineries which require DNA as a template. Histones thereby play a central role in transcription regulation, DNA repair, DNA replication and chromosomal stability. DNA accessibility is regulated via a complex set of post-translational modifications of histones, also called histone code, and nucleosome remodeling. This chain is Histone H3 (HHT1), found in Coccidioides immitis (strain RS) (Valley fever fungus).